The primary structure comprises 163 residues: Transcription elongation factor GreA (163 aa).

A coiled-coil region spans residues 11 to 38 (FKQLEKELDRLKKERPGVIQAIKEAREE).

Belongs to the GreA/GreB family.

In terms of biological role, necessary for efficient RNA polymerase transcription elongation past template-encoded arresting sites. The arresting sites in DNA have the property of trapping a certain fraction of elongating RNA polymerases that pass through, resulting in locked ternary complexes. Cleavage of the nascent transcript by cleavage factors such as GreA or GreB allows the resumption of elongation from the new 3'terminus. GreA releases sequences of 2 to 3 nucleotides. The polypeptide is Transcription elongation factor GreA (Nitratidesulfovibrio vulgaris (strain ATCC 29579 / DSM 644 / CCUG 34227 / NCIMB 8303 / VKM B-1760 / Hildenborough) (Desulfovibrio vulgaris)).